We begin with the raw amino-acid sequence, 96 residues long: Co-chaperonin GroES (96 aa).

Belongs to the GroES chaperonin family. In terms of assembly, heptamer of 7 subunits arranged in a ring. Interacts with the chaperonin GroEL.

The protein localises to the cytoplasm. Together with the chaperonin GroEL, plays an essential role in assisting protein folding. The GroEL-GroES system forms a nano-cage that allows encapsulation of the non-native substrate proteins and provides a physical environment optimized to promote and accelerate protein folding. GroES binds to the apical surface of the GroEL ring, thereby capping the opening of the GroEL channel. This Acinetobacter baylyi (strain ATCC 33305 / BD413 / ADP1) protein is Co-chaperonin GroES.